Here is a 220-residue protein sequence, read N- to C-terminus: Probable nicotinate-nucleotide adenylyltransferase (220 aa).

The protein belongs to the NadD family.

The enzyme catalyses nicotinate beta-D-ribonucleotide + ATP + H(+) = deamido-NAD(+) + diphosphate. It participates in cofactor biosynthesis; NAD(+) biosynthesis; deamido-NAD(+) from nicotinate D-ribonucleotide: step 1/1. Functionally, catalyzes the reversible adenylation of nicotinate mononucleotide (NaMN) to nicotinic acid adenine dinucleotide (NaAD). In Serratia proteamaculans (strain 568), this protein is Probable nicotinate-nucleotide adenylyltransferase.